The primary structure comprises 82 residues: ATP synthase subunit c, chloroplastic (82 aa).

Transmembrane regions (helical) follow at residues 7 to 27 (AASV…PGIG) and 57 to 77 (LAFM…LLFA).

Belongs to the ATPase C chain family. As to quaternary structure, F-type ATPases have 2 components, F(1) - the catalytic core - and F(0) - the membrane proton channel. F(1) has five subunits: alpha(3), beta(3), gamma(1), delta(1), epsilon(1). F(0) has four main subunits: a(1), b(1), b'(1) and c(10-14). The alpha and beta chains form an alternating ring which encloses part of the gamma chain. F(1) is attached to F(0) by a central stalk formed by the gamma and epsilon chains, while a peripheral stalk is formed by the delta, b and b' chains.

It is found in the plastid. Its subcellular location is the chloroplast thylakoid membrane. Its function is as follows. F(1)F(0) ATP synthase produces ATP from ADP in the presence of a proton or sodium gradient. F-type ATPases consist of two structural domains, F(1) containing the extramembraneous catalytic core and F(0) containing the membrane proton channel, linked together by a central stalk and a peripheral stalk. During catalysis, ATP synthesis in the catalytic domain of F(1) is coupled via a rotary mechanism of the central stalk subunits to proton translocation. In terms of biological role, key component of the F(0) channel; it plays a direct role in translocation across the membrane. A homomeric c-ring of between 10-14 subunits forms the central stalk rotor element with the F(1) delta and epsilon subunits. This Rhodomonas salina (Cryptomonas salina) protein is ATP synthase subunit c, chloroplastic.